The following is a 124-amino-acid chain: Small ribosomal subunit protein uS12 (124 aa).

The tract at residues 1 to 32 (MPTIQQLVRKGRQAKTTKTKTPALKGSPQRRG) is disordered. A compositionally biased stretch (basic residues) spans 9–18 (RKGRQAKTTK). A 3-methylthioaspartic acid modification is found at Asp89. The disordered stretch occupies residues 105–124 (QGVRNRKQARSRYGAKKEKS). The span at 108 to 118 (RNRKQARSRYG) shows a compositional bias: basic residues.

This sequence belongs to the universal ribosomal protein uS12 family. In terms of assembly, part of the 30S ribosomal subunit. Contacts proteins S8 and S17. May interact with IF1 in the 30S initiation complex.

With S4 and S5 plays an important role in translational accuracy. Its function is as follows. Interacts with and stabilizes bases of the 16S rRNA that are involved in tRNA selection in the A site and with the mRNA backbone. Located at the interface of the 30S and 50S subunits, it traverses the body of the 30S subunit contacting proteins on the other side and probably holding the rRNA structure together. The combined cluster of proteins S8, S12 and S17 appears to hold together the shoulder and platform of the 30S subunit. In Salinispora arenicola (strain CNS-205), this protein is Small ribosomal subunit protein uS12.